Here is a 465-residue protein sequence, read N- to C-terminus: Alpha-2A adrenergic receptor (465 aa).

Residues 1–48 are Extracellular-facing; sequence MFRQEQPLAEGSFAPMGSLQPEAGNASWNGTEAPGGGARATPYSLQVT. N25 and N29 each carry an N-linked (GlcNAc...) asparagine glycan. Residues 49 to 74 form a helical membrane-spanning segment; sequence LTLVCLAGLLMLFTVFGNVLVIIAVF. Over 75 to 85 the chain is Cytoplasmic; sequence TSRALKAPQNL. The helical transmembrane segment at 86–111 threads the bilayer; sequence FLVSLASADILVATLVIPFSLANEVM. The Extracellular portion of the chain corresponds to 112–121; it reads GYWYFGKAWC. Residues C121 and C203 are joined by a disulfide bond. A helical membrane pass occupies residues 122–144; the sequence is EIYLALDVLFCTSSIVHLCAISL. Residues 145–164 lie on the Cytoplasmic side of the membrane; sequence DRYWSITQAIEYNLKRTPRR. A helical transmembrane segment spans residues 165–188; sequence IKAIIVTVWVISAVISFPPLISIE. Residues 189–207 are Extracellular-facing; the sequence is KKAGGGGQQPAEPRCEIND. A helical membrane pass occupies residues 208 to 232; that stretch reads QKWYVISSCIGSFFAPCLIMILVYV. At 233–389 the chain is on the cytoplasmic side; that stretch reads RIYQIAKRRT…RQNREKRFTF (157 aa). The disordered stretch occupies residues 242-377; sequence TRVPPSRRGP…RGGVAKASRW (136 aa). Over residues 313–330 the composition is skewed to basic and acidic residues; it reads SSEHAERPPGPRRSERGP. A Phosphoserine modification is found at S346. R368 carries the post-translational modification Omega-N-methylarginine. Residues 390–414 form a helical membrane-spanning segment; it reads VLAVVIGVFVVCWFPFFFTYTLTAV. The Extracellular segment spans residues 415 to 424; the sequence is GCSVPPTLFK. The helical transmembrane segment at 425 to 445 threads the bilayer; sequence FFFWFGYCNSSLNPVIYTIFN. The Cytoplasmic portion of the chain corresponds to 446 to 465; it reads HDFRRAFKKILCRGDRKRIV. A lipid anchor (S-palmitoyl cysteine) is attached at C457.

Belongs to the G-protein coupled receptor 1 family. Adrenergic receptor subfamily. ADRA2A sub-subfamily.

The protein resides in the cell membrane. Functionally, alpha-2 adrenergic receptors mediate the catecholamine-induced inhibition of adenylate cyclase through the action of G proteins. The chain is Alpha-2A adrenergic receptor from Sus scrofa (Pig).